The primary structure comprises 380 residues: tRNA pseudouridine synthase B (380 aa).

The Nucleophile role is filled by Asp-63. The interval 309 to 339 (QNVEDDNDDNDDNDDNDDNDDNDDNDDNDDN) is disordered. Over residues 311–338 (VEDDNDDNDDNDDNDDNDDNDDNDDNDD) the composition is skewed to acidic residues.

Belongs to the pseudouridine synthase TruB family. Type 1 subfamily.

The enzyme catalyses uridine(55) in tRNA = pseudouridine(55) in tRNA. Its function is as follows. Responsible for synthesis of pseudouridine from uracil-55 in the psi GC loop of transfer RNAs. This chain is tRNA pseudouridine synthase B, found in Psychrobacter arcticus (strain DSM 17307 / VKM B-2377 / 273-4).